The primary structure comprises 1358 residues: MSYSYAEKKRIRKEFGVLPHILDVPYLLSIQTESYKKFLTVDAAKGRLHSGLEIVLKQSFPVESKNGQYELHYVDYQIGEPTFDETECQVRGATYDAPLNVKLRLVVYNKDALPNEKIVEDIREEYVYMGDIPLMTTNGTFIINGTERVVVSQLHRSPGVFFSKDDSEEGAFSARIIPYRGSWLDFEFDSKGIIWARIDRKRKFCATVILKALGYTQEQILENFSESKTITFNSKGFALRLDNLSNMKGELLKFDIVDAQDNVIVKKNKKLTSRDVKKIKDAGVDSVAIDFDLVSTLRVAKDIVNEATGEVIAYANDDVTESLLESCVEVGMLELEVIDFITTERGRYISDTLKYDLTRNTDEALVEIYKVLRPGDPPAAASVKALFEGLFFIESRYSLSDIGRMKLNARLGSDKVSKDIYTLENSDIVGVIEELINIRDGKGKVDDIDHLGNRRVRSVGEMVENQFRIGLYRVEKGIRESMSLVHKDKLMPKDIVNSKPITAAIKEFFTSGALSQFMDQDNPLSEVTHKRRISALGPGGLSRDRAGFEVRDVHATHYGRLCPIETPEGPNIGLINSLASYARVNDYGFLEAPYRKVVDGKVTDEIEYLSAIDEDNYVIAQASTKLDENNHFVEDIIQCRSGGEAIFTESSRVQYMDVSAKQMVSAAAALIPFLEHDDANRVLMGANMQRQAVPTLKSEKPLVGTGMEKIVARDSGNCIIARNVGEVAEVDSNRIVIKVDTEKSQTSNLVDIYSLTKFKRSNKNTCINQRPIVNVGDKVEAGDILADGFATDFGELSLGHNLMVAFMPWNGYNFEDSILLSERIVKDDKYTSIHIEEFTCVARDTKLGPEEITADIPNVSESSLAKLDESGIVHIGANVEAGDILVAKITPKAEQQLTPEERLLRAIFNEKASNVVDSSLRMPSGTSGTVINVQVFENDKGGKSKRALKIEKELIDKARKDFDEEFAVIESVVKSSIEQEVVGAKIQKAKGLKKGAILTKEFLATLPLSKWLEISFEDEKLEEKVQNAREYYEEAKIAIDAKFEAKKKSITQSNELSPGVLKTVKVFVAIKKRIQPGDKMAGRHGNKGVVSRVLPVEDMPYMEDGTPVDVCLNPLGIPSRMNIGQILEAHLGLASYGLGKKIEKTLEKTRKAAELRKTLEEVYNSVGDKKVNLEALNDEEILTLCDNLKGGVPIATPVFDGAKEEDIKSLLKIGGFATNGQMKLFDGRTGKPFDRHVTVGYMYMLKLDHLVDDKMHARSTGSYSLVTQQPLGGKAQFGGQRFGEMEVWALQAYGAAYTLREMLTVKSDDIAGRSKMYKNIVDGKLTMNVDVPESFNVLRNEVRALGIDMDFDYSSEEE.

This sequence belongs to the RNA polymerase beta chain family. As to quaternary structure, the RNAP catalytic core consists of 2 alpha, 1 beta, 1 beta' and 1 omega subunit. When a sigma factor is associated with the core the holoenzyme is formed, which can initiate transcription.

The catalysed reaction is RNA(n) + a ribonucleoside 5'-triphosphate = RNA(n+1) + diphosphate. Its function is as follows. DNA-dependent RNA polymerase catalyzes the transcription of DNA into RNA using the four ribonucleoside triphosphates as substrates. The chain is DNA-directed RNA polymerase subunit beta from Francisella tularensis subsp. holarctica (strain OSU18).